Here is a 274-residue protein sequence, read N- to C-terminus: Glucosamine-6-phosphate deaminase (274 aa).

Residue Asp72 is the Proton acceptor; for enolization step of the active site. The For ring-opening step role is filled by Asp141. His143 serves as the catalytic Proton acceptor; for ring-opening step. The active-site For ring-opening step is Glu148.

It belongs to the glucosamine/galactosamine-6-phosphate isomerase family. Homohexamer.

It is found in the cytoplasm. It catalyses the reaction alpha-D-glucosamine 6-phosphate + H2O = beta-D-fructose 6-phosphate + NH4(+). It participates in nucleotide-sugar biosynthesis; UDP-N-acetyl-alpha-D-glucosamine biosynthesis; alpha-D-glucosamine 6-phosphate from D-fructose 6-phosphate: step 1/1. Functionally, catalyzes the reversible conversion of alpha-D-glucosamine 6-phosphate (GlcN-6P) into beta-D-fructose 6-phosphate (Fru-6P) and ammonium ion, a regulatory reaction step in de novo uridine diphosphate-N-acetyl-alpha-D-glucosamine (UDP-GlcNAc) biosynthesis via hexosamine pathway. This chain is Glucosamine-6-phosphate deaminase, found in Drosophila pseudoobscura pseudoobscura (Fruit fly).